An 890-amino-acid polypeptide reads, in one-letter code: V-type proton ATPase subunit a, Golgi isoform (890 aa).

N-acetylmethionine is present on methionine 1. At methionine 1–glutamate 450 the chain is on the cytoplasmic side. The stretch at leucine 113 to isoleucine 154 forms a coiled coil. Serine 223 and serine 228 each carry phosphoserine. The stretch at leucine 297 to leucine 347 forms a coiled coil. A helical transmembrane segment spans residues isoleucine 451–phenylalanine 469. Residues glycine 470 to aspartate 471 are Vacuolar-facing. Residues methionine 472 to asparagine 488 traverse the membrane as a helical segment. Residues glutamate 489–aspartate 502 lie on the Cytoplasmic side of the membrane. A helical transmembrane segment spans residues methionine 503–serine 532. Residues methionine 533 to serine 580 lie on the Vacuolar side of the membrane. A helical transmembrane segment spans residues tyrosine 581–phenylalanine 600. At serine 601–phenylalanine 618 the chain is on the cytoplasmic side. Residues isoleucine 619–lysine 639 form a helical membrane-spanning segment. The Vacuolar portion of the chain corresponds to tryptophan 640–valine 682. A helical membrane pass occupies residues leucine 683 to leucine 702. Residues arginine 703–threonine 779 lie on the Cytoplasmic side of the membrane. A helical membrane pass occupies residues isoleucine 780–alanine 804. The Vacuolar segment spans residues glutamine 805–leucine 828. Residues alanine 829–glutamate 867 traverse the membrane as a helical segment. Topologically, residues alanine 868–glutamate 890 are cytoplasmic.

Belongs to the V-ATPase 116 kDa subunit family. As to quaternary structure, V-ATPase is a heteromultimeric enzyme composed of a peripheral catalytic V1 complex (components A to H) attached to an integral membrane V0 proton pore complex (components: a, c, c', c'', d, e, f and VOA1). In terms of processing, glycosylated.

It is found in the endosome membrane. The protein localises to the golgi apparatus membrane. Its function is as follows. Subunit of the V0 complex of vacuolar(H+)-ATPase (V-ATPase), a multisubunit enzyme composed of a peripheral complex (V1) that hydrolyzes ATP and a membrane integral complex (V0) that translocates protons. V-ATPase is responsible for acidifying and maintaining the pH of intracellular compartments. Is present only in Golgi- and endosome-residing V-ATPase complexes; enzymes containing this subunit have a 4-fold lower ratio of proton transport to ATP hydrolysis than complexes containing the vacuolar isoform and do not dissociate V1 and V0 in response to glucose depletion. This chain is V-type proton ATPase subunit a, Golgi isoform (STV1), found in Saccharomyces cerevisiae (strain ATCC 204508 / S288c) (Baker's yeast).